A 45-amino-acid polypeptide reads, in one-letter code: Globin, minor monomeric component (45 aa).

The Globin domain maps to 1-45 (GLSAAERQVVASCWKDIAGADXGAGVGKEXLIKFISAAPEMAAVF).

The protein belongs to the globin family. In terms of assembly, monomer.

The sequence is that of Globin, minor monomeric component from Glycera dibranchiata (Bloodworm).